Here is a 345-residue protein sequence, read N- to C-terminus: Phosphoribosylformylglycinamidine cyclo-ligase (345 aa).

The protein belongs to the AIR synthase family.

It is found in the cytoplasm. The enzyme catalyses 2-formamido-N(1)-(5-O-phospho-beta-D-ribosyl)acetamidine + ATP = 5-amino-1-(5-phospho-beta-D-ribosyl)imidazole + ADP + phosphate + H(+). It participates in purine metabolism; IMP biosynthesis via de novo pathway; 5-amino-1-(5-phospho-D-ribosyl)imidazole from N(2)-formyl-N(1)-(5-phospho-D-ribosyl)glycinamide: step 2/2. This Shewanella baltica (strain OS185) protein is Phosphoribosylformylglycinamidine cyclo-ligase.